The following is a 1354-amino-acid chain: Rho-associated protein kinase 1 (1354 aa).

Ser2 bears the N-acetylserine mark. The 263-residue stretch at 76–338 (YEVVKVIGRG…VEEIKRHLFF (263 aa)) folds into the Protein kinase domain. ATP-binding positions include 82-90 (IGRGAFGEV) and Lys105. Catalysis depends on Asp198, which acts as the Proton acceptor. The AGC-kinase C-terminal domain occupies 341–409 (DQWAWETLRD…YSNRRYLSPA (69 aa)). Residues 368–727 (FDDLEEDKGD…KKLKEEREAR (360 aa)) are interaction with FHOD1. The stretch at 422–692 (KSLQENLQKT…RLEQEVNEHK (271 aa)) forms a coiled coil. The 78-residue stretch at 479–556 (STVSQIEKEK…LEEANDLLRT (78 aa)) folds into the REM-1 domain. An SHROOM3 binding region spans residues 707 to 946 (EAKSVAMCEM…AVSRLEETNS (240 aa)). The region spanning 949–1015 (TKDIELLRKE…LAEIMNRKDF (67 aa)) is the RhoBD domain. The tract at residues 998–1010 (LKTQAVNKLAEIM) is RHOA binding. Residues 1011–1102 (NRKDFKIDKK…KLSDLSDSTS (92 aa)) adopt a coiled-coil conformation. Residues 1101–1120 (TSVASFPSADETDPNLPESR) are disordered. A phosphoserine mark is found at Ser1105 and Ser1108. The interval 1115-1354 (NLPESRIEGW…VVKNTSGKTS (240 aa)) is auto-inhibitory. The 200-residue stretch at 1118–1317 (ESRIEGWLSV…WVTHLVKKIP (200 aa)) folds into the PH domain. A Phorbol-ester/DAG-type zinc finger spans residues 1228–1283 (GHEFIPTLYHFPANCEACAKPLWHVFKPPPALECRRCHVKCHRDHLDKKEDLISPC). Ser1328 carries the post-translational modification Phosphoserine. Positions 1333-1354 (STRSTANQSFRKVVKNTSGKTS) are disordered.

It belongs to the protein kinase superfamily. AGC Ser/Thr protein kinase family. As to quaternary structure, homodimer. Interacts with RHOA (activated by GTP), RHOB, RHOC, GEM, MYLC2B, RHOE, PPP1R12A, LIMK1, LIMK2, TSG101, CHORDC1, DAPK3, PFN1, PTEN and JIP3. Interacts with FHOD1 in a Src-dependent manner. Interacts with ITGB1BP1 (via N-terminus and PTB domain). Interacts with SHROOM3. The cofactor is Mg(2+). In terms of processing, autophosphorylated on serine and threonine residues. Post-translationally, cleaved by caspase-3 during apoptosis. This leads to constitutive activation of the kinase and membrane blebbing. As to expression, detected in corneal epithelium.

The protein localises to the cytoplasm. It is found in the cytoskeleton. Its subcellular location is the microtubule organizing center. The protein resides in the centrosome. It localises to the centriole. The protein localises to the golgi apparatus membrane. It is found in the cell projection. Its subcellular location is the bleb. The protein resides in the cell membrane. It localises to the lamellipodium. The protein localises to the ruffle. The enzyme catalyses L-seryl-[protein] + ATP = O-phospho-L-seryl-[protein] + ADP + H(+). The catalysed reaction is L-threonyl-[protein] + ATP = O-phospho-L-threonyl-[protein] + ADP + H(+). Activated by RHOA binding. Inhibited by Y-27632. Functionally, protein kinase which is a key regulator of the actin cytoskeleton and cell polarity. Involved in regulation of smooth muscle contraction, actin cytoskeleton organization, stress fiber and focal adhesion formation, neurite retraction, cell adhesion and motility via phosphorylation of DAPK3, GFAP, LIMK1, LIMK2, MYL9/MLC2, TPPP, PFN1 and PPP1R12A. Phosphorylates FHOD1 and acts synergistically with it to promote SRC-dependent non-apoptotic plasma membrane blebbing. Phosphorylates JIP3 and regulates the recruitment of JNK to JIP3 upon UVB-induced stress. Acts as a suppressor of inflammatory cell migration by regulating PTEN phosphorylation and stability. Acts as a negative regulator of VEGF-induced angiogenic endothelial cell activation. Required for centrosome positioning and centrosome-dependent exit from mitosis. Plays a role in terminal erythroid differentiation. Inhibits podocyte motility via regulation of actin cytoskeletal dynamics and phosphorylation of CFL1. Promotes keratinocyte terminal differentiation. Involved in osteoblast compaction through the fibronectin fibrillogenesis cell-mediated matrix assembly process, essential for osteoblast mineralization. May regulate closure of the eyelids and ventral body wall by inducing the assembly of actomyosin bundles. This chain is Rho-associated protein kinase 1 (ROCK1), found in Oryctolagus cuniculus (Rabbit).